A 378-amino-acid polypeptide reads, in one-letter code: Cytochrome b (378 aa).

4 helical membrane passes run 34–54 (FGSL…FLAM), 78–99 (WFLR…FIHV), 114–134 (WNTG…GYVL), and 179–199 (FFTF…IHLL). Residues H84 and H98 each coordinate heme b. Heme b contacts are provided by H183 and H197. H202 contacts a ubiquinone. Helical transmembrane passes span 227–247 (YKDI…IWKF), 289–309 (LGGV…PFTH), 321–341 (LNQI…WIGA), and 348–368 (YILT…INPL).

It belongs to the cytochrome b family. The main subunits of complex b-c1 are: cytochrome b, cytochrome c1 and the Rieske protein. It depends on heme b as a cofactor.

The protein localises to the mitochondrion inner membrane. In terms of biological role, component of the ubiquinol-cytochrome c reductase complex (complex III or cytochrome b-c1 complex) that is part of the mitochondrial respiratory chain. The b-c1 complex mediates electron transfer from ubiquinol to cytochrome c. Contributes to the generation of a proton gradient across the mitochondrial membrane that is then used for ATP synthesis. This Anopheles gambiae (African malaria mosquito) protein is Cytochrome b (mt:Cyt-b).